Reading from the N-terminus, the 57-residue chain is Small ribosomal subunit protein bS21 (57 aa).

Residues 34 to 57 (RKEHYIKPSVQKKNRQKNMRSKKR) are disordered. Positions 43 to 57 (VQKKNRQKNMRSKKR) are enriched in basic residues.

Belongs to the bacterial ribosomal protein bS21 family.

The protein is Small ribosomal subunit protein bS21 of Aster yellows witches'-broom phytoplasma (strain AYWB).